A 194-amino-acid polypeptide reads, in one-letter code: Thymidine kinase (194 aa).

ATP is bound by residues 15-22 (GSMFSGKS) and 88-91 (DEVQ). The active-site Proton acceptor is the Glu-89. Cys-145, Cys-148, Cys-183, and His-186 together coordinate Zn(2+).

This sequence belongs to the thymidine kinase family. As to quaternary structure, homotetramer.

Its subcellular location is the cytoplasm. It catalyses the reaction thymidine + ATP = dTMP + ADP + H(+). This chain is Thymidine kinase, found in Bacillus velezensis (strain DSM 23117 / BGSC 10A6 / LMG 26770 / FZB42) (Bacillus amyloliquefaciens subsp. plantarum).